The primary structure comprises 127 residues: Ribosome-binding factor A (127 aa).

Belongs to the RbfA family. As to quaternary structure, monomer. Binds 30S ribosomal subunits, but not 50S ribosomal subunits or 70S ribosomes.

Its subcellular location is the cytoplasm. Functionally, one of several proteins that assist in the late maturation steps of the functional core of the 30S ribosomal subunit. Associates with free 30S ribosomal subunits (but not with 30S subunits that are part of 70S ribosomes or polysomes). Required for efficient processing of 16S rRNA. May interact with the 5'-terminal helix region of 16S rRNA. This chain is Ribosome-binding factor A, found in Stenotrophomonas maltophilia (strain R551-3).